The primary structure comprises 172 residues: NADH-quinone oxidoreductase subunit B (172 aa).

Positions 46, 47, 111, and 141 each coordinate [4Fe-4S] cluster.

Belongs to the complex I 20 kDa subunit family. In terms of assembly, NDH-1 is composed of 14 different subunits. Subunits NuoB, C, D, E, F, and G constitute the peripheral sector of the complex. [4Fe-4S] cluster is required as a cofactor.

Its subcellular location is the cell membrane. The enzyme catalyses a quinone + NADH + 5 H(+)(in) = a quinol + NAD(+) + 4 H(+)(out). In terms of biological role, NDH-1 shuttles electrons from NADH, via FMN and iron-sulfur (Fe-S) centers, to quinones in the respiratory chain. The immediate electron acceptor for the enzyme in this species is believed to be a menaquinone. Couples the redox reaction to proton translocation (for every two electrons transferred, four hydrogen ions are translocated across the cytoplasmic membrane), and thus conserves the redox energy in a proton gradient. The chain is NADH-quinone oxidoreductase subunit B from Bacillus mycoides (strain KBAB4) (Bacillus weihenstephanensis).